We begin with the raw amino-acid sequence, 405 residues long: MTVLSEQDKIRLLADIVKIQTENDHEIEVCEYLKDLLSQYDIDSKIVKVNDSRANLVAEIGSGAPVLAISGHMDVVDAGDHDDWTFPPFELTDKDGKLFGRGTTDMKGGLMAMVIAMIELKQSNALKQGTIRLLATTGEETEQYGAQLLADEGYLDDVSGLIIGEPTSNIAYYAHKGSMSCVVTAKGKAAHSSMPHLGTNAVDILVDFVNEMKQEYKNIKEHDKVHELDAVPMIEKHLHRKIGEEESHIYSGFVMLNSVFNGGKQVNSVPHKATAKYNVRTVPEYDSTFVKDLFEKVIRHVGEDYLTVDIPSSHDPVASDRDNPLIQNITRIAPNYVHEDIVVSALIGTTDASSFLGTNENNVDFAVFGPGESIMAHRVDEFIRKDMYLSYIDVYKDVFKAYLEK.

Residue histidine 72 coordinates Zn(2+). Residue aspartate 74 is part of the active site. A Zn(2+)-binding site is contributed by aspartate 105. The active-site Proton acceptor is glutamate 139. Zn(2+) is bound by residues glutamate 140, glutamate 165, and histidine 377.

This sequence belongs to the peptidase M20A family. Zn(2+) serves as cofactor. It depends on Co(2+) as a cofactor.

It catalyses the reaction N-succinyl-(2S,6S)-2,6-diaminopimelate + H2O = (2S,6S)-2,6-diaminopimelate + succinate. The protein operates within amino-acid biosynthesis; L-lysine biosynthesis via DAP pathway; LL-2,6-diaminopimelate from (S)-tetrahydrodipicolinate (succinylase route): step 3/3. The protein is Probable succinyl-diaminopimelate desuccinylase (dapE) of Staphylococcus epidermidis (strain ATCC 35984 / DSM 28319 / BCRC 17069 / CCUG 31568 / BM 3577 / RP62A).